The chain runs to 618 residues: Probable peptide transporter ptr2 (618 aa).

Ser22 carries the phosphoserine modification. Phosphotyrosine is present on Tyr23. Phosphoserine occurs at positions 25 and 33. A disordered region spans residues Lys26–Lys50. Residues Ala34–Lys50 are compositionally biased toward polar residues. A Phosphothreonine modification is found at Thr35. Residue Ser44 is modified to Phosphoserine. Phosphothreonine is present on Thr45. Ser51 and Ser53 each carry phosphoserine. Phosphothreonine is present on Thr54. The next 10 membrane-spanning stretches (helical) occupy residues Gly131–Ala151, Ile161–Pro181, Gly187–Ile207, Tyr247–Leu267, Phe273–Val293, Phe400–Leu420, Ile430–Leu450, Val475–Thr495, Ser510–Ile530, and Trp541–Phe561. At Ser594 the chain carries Phosphoserine. Position 618 is a phosphothreonine (Thr618).

Belongs to the major facilitator superfamily. Proton-dependent oligopeptide transporter (POT/PTR) (TC 2.A.17) family.

Its subcellular location is the membrane. Uptake of small peptides. The protein is Probable peptide transporter ptr2 (ptr2) of Schizosaccharomyces pombe (strain 972 / ATCC 24843) (Fission yeast).